The primary structure comprises 399 residues: Sphingosine-1-phosphate phosphatase 2 (399 aa).

Helical transmembrane passes span 88 to 108 (YLFQ…FLPF), 121 to 141 (LIII…VLKW), 160 to 180 (YGMP…LLIS), and 185 to 205 (YQYP…LVCL). The interval 136 to 144 (KDVLKWPRP) is phosphatase sequence motif I. The phosphatase sequence motif II stretch occupies residues 163-166 (PSTH). The Proton donor role is filled by H166. Residues 206–217 (SRLYTGMHTVLD) form a phosphatase sequence motif III region. Residue H213 is the Nucleophile of the active site. Transmembrane regions (helical) follow at residues 219–239 (LGGV…WTFI), 247–267 (PLFP…YPVS), 280–300 (ILAA…FQLV), 318–338 (TYML…ILLV), and 371–391 (VPYK…FVPM).

This sequence belongs to the type 2 lipid phosphate phosphatase family. In terms of tissue distribution, expressed strongly in kidney and heart, followed by brain, colon, small intestine and lung. Not detected in skeletal muscle, thymus, spleen, liver, placenta, and peripheral blood leukocytes.

The protein localises to the endoplasmic reticulum membrane. The enzyme catalyses sphinganine 1-phosphate + H2O = sphinganine + phosphate. It catalyses the reaction sphing-4-enine 1-phosphate + H2O = sphing-4-enine + phosphate. The catalysed reaction is (4R)-hydroxysphinganine 1-phosphate + H2O = (4R)-hydroxysphinganine + phosphate. In terms of biological role, has specific phosphohydrolase activity towards sphingoid base 1-phosphates. Has high phosphohydrolase activity against dihydrosphingosine-1-phosphate and sphingosine-1-phosphate (S1P) in vitro. Sphingosine-1-phosphate phosphatase activity is needed for efficient recycling of sphingosine into the sphingolipid synthesis pathway. May play a role in attenuating intracellular sphingosine 1-phosphate (S1P) signaling. May play a role in pro-inflammatory signaling. Plays a role in the regulation of pancreatic islet beta-cell endoplasmic reticulum stress and proliferation. The polypeptide is Sphingosine-1-phosphate phosphatase 2 (Homo sapiens (Human)).